The following is a 753-amino-acid chain: Serine/threonine-protein phosphatase with EF-hands 2 (753 aa).

The IQ domain maps to 21 to 46 (KAAALIQRWYRRYVARLEMRRRCTWS). The interval 128-540 (ATALVEAFRL…PHIVQYQANK (413 aa)) is catalytic. Mn(2+) is bound by residues Asp179, His181, Asp208, and Asn240. His241 (proton donor) is an active-site residue. A Mn(2+)-binding site is contributed by His292. Disordered stretches follow at residues 318 to 382 (CKTR…GSLD) and 409 to 435 (VTGE…KPTQ). The segment covering 322–333 (QKSEKQMEEKRR) has biased composition (basic and acidic residues). The span at 348–361 (LPESRSLPSSPLRL) shows a compositional bias: low complexity. A compositionally biased stretch (polar residues) spans 366 to 377 (AQKTSRSSSIPC). Position 488 (His488) interacts with Mn(2+). 3 consecutive EF-hand domains span residues 568–603 (AHSS…VLHL), 652–687 (RNRS…FSSH), and 692–727 (ITDD…VEKS). Ca(2+)-binding residues include Asp665, Asp667, Ser669, Glu676, Asp705, Asn707, Asp709, His711, and Glu716. Residues 732–753 (DASECPQATNAKDSGCSSPGAH) are disordered. Residues 737–753 (PQATNAKDSGCSSPGAH) are compositionally biased toward polar residues.

This sequence belongs to the PPP phosphatase family. Mn(2+) is required as a cofactor. In terms of tissue distribution, retinal specific.

Its subcellular location is the cytoplasm. It is found in the cell projection. The protein localises to the cilium. The protein resides in the photoreceptor outer segment. It localises to the photoreceptor inner segment. The catalysed reaction is O-phospho-L-seryl-[protein] + H2O = L-seryl-[protein] + phosphate. It catalyses the reaction O-phospho-L-threonyl-[protein] + H2O = L-threonyl-[protein] + phosphate. With respect to regulation, activated by calcium. In terms of biological role, may play a role in phototransduction. May dephosphorylate photoactivated rhodopsin. May function as a calcium sensing regulator of ionic currents, energy production or synaptic transmission. In Homo sapiens (Human), this protein is Serine/threonine-protein phosphatase with EF-hands 2 (PPEF2).